The sequence spans 312 residues: D-alanine--D-alanine ligase (312 aa).

The ATP-grasp domain occupies 108–308 (KLVWQQTGIP…YSELVVKVLS (201 aa)). 138-193 (VAKLGVPLFVKPASEGSSVAVEKVKSADALPAALEEAAKHDKIVIVEKSIEGGGEY) lines the ATP pocket. Mg(2+) contacts are provided by D262, E275, and N277.

Belongs to the D-alanine--D-alanine ligase family. The cofactor is Mg(2+). Requires Mn(2+) as cofactor.

The protein localises to the cytoplasm. The catalysed reaction is 2 D-alanine + ATP = D-alanyl-D-alanine + ADP + phosphate + H(+). It participates in cell wall biogenesis; peptidoglycan biosynthesis. Functionally, cell wall formation. This Burkholderia mallei (strain NCTC 10247) protein is D-alanine--D-alanine ligase.